A 152-amino-acid polypeptide reads, in one-letter code: D-erythrulose-4-phosphate isomerase 2 (152 aa).

C70 serves as the catalytic Proton acceptor.

It belongs to the LacAB/RpiB family.

The enzyme catalyses D-erythrulose 4-phosphate = D-erythrose 4-phosphate. It functions in the pathway carbohydrate metabolism; erythritol degradation. It participates in carbohydrate metabolism; D-threitol degradation. The protein operates within carbohydrate metabolism; L-threitol degradation. In terms of biological role, catalyzes the isomerization of D-erythrulose-4P to D-erythrose-4P. Involved in the degradation pathways of L-threitol, D-threitol and erythritol, that allow M.smegmatis to grow on these compounds as the sole carbon source. The protein is D-erythrulose-4-phosphate isomerase 2 of Mycolicibacterium smegmatis (strain ATCC 700084 / mc(2)155) (Mycobacterium smegmatis).